A 505-amino-acid chain; its full sequence is ATP synthase subunit alpha, chloroplastic (505 aa).

An ATP-binding site is contributed by 170 to 177; the sequence is GDRQTGKT.

The protein belongs to the ATPase alpha/beta chains family. F-type ATPases have 2 components, CF(1) - the catalytic core - and CF(0) - the membrane proton channel. CF(1) has five subunits: alpha(3), beta(3), gamma(1), delta(1), epsilon(1). CF(0) has four main subunits: a, b, b' and c.

Its subcellular location is the plastid. The protein localises to the chloroplast thylakoid membrane. It carries out the reaction ATP + H2O + 4 H(+)(in) = ADP + phosphate + 5 H(+)(out). Its function is as follows. Produces ATP from ADP in the presence of a proton gradient across the membrane. The alpha chain is a regulatory subunit. This Oenothera elata subsp. hookeri (Hooker's evening primrose) protein is ATP synthase subunit alpha, chloroplastic.